We begin with the raw amino-acid sequence, 220 residues long: MNVKIESSWQQRLQEEFDKPYFEKLVNFVKNEYGKAHILPPGHQIFHVFNSCPFQNVKVVILGQDPYPNPGQYYGICFSVPDGVAIPGSLSNIFKEIHQDLGKPLPNSGNLDRWVKQGVFPMNSVLTVRAHETGSHRNIGWETFTDAVIKKLSEERENLVFMLWGSYAKEKASLIDTDKHLILTAVHPSPRSADYGFFGCKHFSKANTFLRSRGIEEIDW.

D65 functions as the Proton acceptor in the catalytic mechanism.

This sequence belongs to the uracil-DNA glycosylase (UDG) superfamily. UNG family.

It is found in the cytoplasm. It catalyses the reaction Hydrolyzes single-stranded DNA or mismatched double-stranded DNA and polynucleotides, releasing free uracil.. Excises uracil residues from the DNA which can arise as a result of misincorporation of dUMP residues by DNA polymerase or due to deamination of cytosine. In Bacteroides fragilis (strain ATCC 25285 / DSM 2151 / CCUG 4856 / JCM 11019 / LMG 10263 / NCTC 9343 / Onslow / VPI 2553 / EN-2), this protein is Uracil-DNA glycosylase 1.